A 449-amino-acid polypeptide reads, in one-letter code: MTDRLHIVGGGMAGSEAAWQAAQQGIDVVIHEMRPTVGTFAHQTGNLAEMVCSNSFRSDDDEQNAVGLLHWEMRAAGGLIMSAADAHRLPAGGALAVDRDPFAETVTARLHAHPRVSVTAEEVTELPRDGHWIFATGPLTSPALGAAIQAETGAEALAFFDAIAPIVYADTIDMSRAWMQSRYDKGETEEERTAYLNCPMDRDQYEAFIDALLAADKTEFHEGETATYFDGCLPIEVMAERGRETLRHGPMKPVGLTNPHQPDVKAYAVVQLRRDNALGTLYNIVGFQTKMKYGAQTAVFKTIPGLENASFARLGGIHRNTFLNSPTLLDAQMRMKSRPNIRFAGQITGVEGYVESAAMGLLAGRLAAAEIQGRALPEVPQDSAMGALIHHITGGAEAKTFQPMNVNFGLFRPVDGLKGGRRGRKDRYKAYTDRAKEAWTSWLAEAENG.

9–14 (GGGMAG) lines the FAD pocket.

This sequence belongs to the MnmG family. TrmFO subfamily. Requires FAD as cofactor.

Its subcellular location is the cytoplasm. It catalyses the reaction uridine(54) in tRNA + (6R)-5,10-methylene-5,6,7,8-tetrahydrofolate + NADH + H(+) = 5-methyluridine(54) in tRNA + (6S)-5,6,7,8-tetrahydrofolate + NAD(+). It carries out the reaction uridine(54) in tRNA + (6R)-5,10-methylene-5,6,7,8-tetrahydrofolate + NADPH + H(+) = 5-methyluridine(54) in tRNA + (6S)-5,6,7,8-tetrahydrofolate + NADP(+). Functionally, catalyzes the folate-dependent formation of 5-methyl-uridine at position 54 (M-5-U54) in all tRNAs. The protein is Methylenetetrahydrofolate--tRNA-(uracil-5-)-methyltransferase TrmFO of Ruegeria pomeroyi (strain ATCC 700808 / DSM 15171 / DSS-3) (Silicibacter pomeroyi).